The following is an 85-amino-acid chain: Large ribosomal subunit protein bL27 (85 aa).

Residues 1-20 (MATKKAGGSTRNGRDSEAKR) are disordered.

It belongs to the bacterial ribosomal protein bL27 family.

This Glaesserella parasuis serovar 5 (strain SH0165) (Haemophilus parasuis) protein is Large ribosomal subunit protein bL27.